The primary structure comprises 104 residues: Large ribosomal subunit protein uL23 (104 aa).

It belongs to the universal ribosomal protein uL23 family. Part of the 50S ribosomal subunit. Contacts protein L29, and trigger factor when it is bound to the ribosome.

Its function is as follows. One of the early assembly proteins it binds 23S rRNA. One of the proteins that surrounds the polypeptide exit tunnel on the outside of the ribosome. Forms the main docking site for trigger factor binding to the ribosome. The protein is Large ribosomal subunit protein uL23 of Nostoc sp. (strain PCC 7120 / SAG 25.82 / UTEX 2576).